Reading from the N-terminus, the 273-residue chain is Protein FAM210A (273 aa).

Positions 95–116 (VLSSSSTSQETPSEKKEEPDPL) are disordered. Basic and acidic residues predominate over residues 106–116 (PSEKKEEPDPL). One can recognise a DUF1279 domain in the interval 118 to 230 (DKSISLYQRF…GYMSTPPPVK (113 aa)). The chain crosses the membrane as a helical span at residues 138–158 (LIPVHLITSGIWFGTFYYASI). The stretch at 233–272 (LQGRMEETKELISEKMEETKDRLTEKLQETKEKVSFKKKV) forms a coiled coil. Residues 247–273 (KMEETKDRLTEKLQETKEKVSFKKKVE) form a disordered region.

Belongs to the FAM210 family. As to quaternary structure, interacts with ATAD3A.

It localises to the membrane. The protein resides in the mitochondrion. The protein localises to the cytoplasm. In terms of biological role, may play a role in the structure and strength of both muscle and bone. This is Protein FAM210A (Fam210a) from Rattus norvegicus (Rat).